The sequence spans 300 residues: MKIAILSRDGTLYSCKRLVEAAEQRGHSIEVIDPLSCYMNINPAAPTIHYRGRQLERYDAVIPRIGSAMTFYGTAVLRQFELLGSYPLNESVAITRARDKLRSLQLLARQGIDLPITGFAHSPDDTGDLIELVGGAPLVVKLVEGTQGIGVVLAETRQAAESVIDAFRGLNAHILVQEYIREAQGSDVRCLVVGSKVVAAIERQAKPGEFRSNLHRGGTARKVSITAKERAIAVKAATTLGLDVAGVDILRAARGPLVMEVNASPGLEGVESTTGLDIAGRMIEYIEQRGRPGFRLKSGG.

The ATP-grasp domain maps to 104–287; the sequence is LQLLARQGID…IAGRMIEYIE (184 aa). Residues lysine 141, 178 to 179, aspartate 187, and 211 to 213 each bind ATP; these read EY and RSN. 3 residues coordinate Mg(2+): aspartate 248, glutamate 260, and asparagine 262. The Mn(2+) site is built by aspartate 248, glutamate 260, and asparagine 262.

It belongs to the RimK family. It depends on Mg(2+) as a cofactor. The cofactor is Mn(2+).

The protein is Probable alpha-L-glutamate ligase of Serratia proteamaculans (strain 568).